Reading from the N-terminus, the 161-residue chain is Allophycocyanin alpha chain (161 aa).

N71 carries the N4-methylasparagine modification. (2R,3E)-phycocyanobilin is bound at residue C81.

Belongs to the phycobiliprotein family. In terms of assembly, heterodimer of an alpha and a beta chain. In terms of processing, contains one covalently linked phycocyanobilin chromophore.

The protein resides in the plastid. Its subcellular location is the chloroplast thylakoid membrane. Light-harvesting photosynthetic bile pigment-protein from the phycobiliprotein complex. Allophycocyanin has a maximum absorption at approximately 650 nanometers. The polypeptide is Allophycocyanin alpha chain (apcA) (Porphyra purpurea (Red seaweed)).